The following is a 137-amino-acid chain: Glycine cleavage system H protein (137 aa).

The Lipoyl-binding domain maps to 36 to 118; the sequence is PAIIGITEYA…YGEGWLLKVE (83 aa). Position 77 is an N6-lipoyllysine (Lys-77).

This sequence belongs to the GcvH family. In terms of assembly, the glycine cleavage system is composed of four proteins: P, T, L and H. The cofactor is (R)-lipoate.

The glycine cleavage system catalyzes the degradation of glycine. The H protein shuttles the methylamine group of glycine from the P protein to the T protein. This Bifidobacterium longum (strain NCC 2705) protein is Glycine cleavage system H protein.